The following is a 98-amino-acid chain: MFDLRTKVMIGIASTLLIAAIMLITLVFCLYQKISKALKLAKEPECCIDPCKDPNEKIIRAKPIIAETCRNLPCCDDCSIYKDVGSLPPCYCVTNEGL.

The first 29 residues, 1-29, serve as a signal peptide directing secretion; that stretch reads MFDLRTKVMIGIASTLLIAAIMLITLVFC.

This sequence belongs to the FAM24 family.

It is found in the secreted. The chain is Protein FAM24A (Fam24a) from Mus musculus (Mouse).